Reading from the N-terminus, the 649-residue chain is Probable potassium transport system protein Kup (649 aa).

A run of 12 helical transmembrane segments spans residues 1–21 (MAIV…LYTM), 42–62 (ILSL…VFIA), 84–104 (GAWL…DSVL), 126–146 (IMSG…VCLF), 159–179 (TFGT…LVNL), 195–215 (VEFL…TVFL), 235–255 (IYFT…GQGA), 286–306 (VAVL…ITGA), 334–354 (LYIP…LAMF), 364–384 (YGLA…VYIW), 390–410 (VGAV…FFAS), and 414–434 (FLHG…IMYT).

It belongs to the HAK/KUP transporter (TC 2.A.72) family.

The protein resides in the cell membrane. It carries out the reaction K(+)(in) + H(+)(in) = K(+)(out) + H(+)(out). Its function is as follows. Transport of potassium into the cell. Likely operates as a K(+):H(+) symporter. This is Probable potassium transport system protein Kup from Bifidobacterium adolescentis (strain ATCC 15703 / DSM 20083 / NCTC 11814 / E194a).